We begin with the raw amino-acid sequence, 723 residues long: Calpastatin (723 aa).

2 disordered regions span residues 1–402 (MNPT…PGRC) and 422–509 (STHS…LPPL). A compositionally biased stretch (basic residues) spans 21 to 30 (PNKKRHKKQA). K32 participates in a covalent cross-link: Glycyl lysine isopeptide (Lys-Gly) (interchain with G-Cter in SUMO2). Over residues 46–84 (VVHEKKTQEVKPKEHTEPKSQPKHPSDTRSKHAPKEKAV) the composition is skewed to basic and acidic residues. Position 50 is an N6-acetyllysine (K50). Low complexity-rich tracts occupy residues 85 to 94 (SKSSEQPPSE) and 113 to 125 (SAVPAVAAAASAE). At S87 the chain carries Phosphoserine. Phosphothreonine is present on T137. Residues 157–173 (TALDDLIDTLGEPEETK) are compositionally biased toward acidic residues. The Inhibitory domain 1 repeat unit spans residues 171–224 (ETKEDTTTYTGPEVSDPMSSTYIEELGKREVTLPPKYRELLNKEEGIAGPPPDS). The span at 195–216 (ELGKREVTLPPKYRELLNKEEG) shows a compositional bias: basic and acidic residues. 2 positions are modified to phosphoserine: S224 and S245. 2 stretches are compositionally biased toward basic and acidic residues: residues 249–263 (DAKKTEKEKSTEEAL) and 306–367 (PRPE…KPLS). The Inhibitory domain 2 repeat unit spans residues 307-359 (RPELDPSSIKEVDEAKAKEEKVKKCGEDEERVPSEYRLKPATDKDGKPLLPEA). 3 positions are modified to phosphoserine: S367, S369, and S376. Residues 378–396 (DFDRSKCKEKQSKPTEKNR) show a composition bias toward basic and acidic residues. S443 bears the Phosphoserine mark. The span at 445-504 (GKKEADPEDGKPVEDKVKEKAKEEDREKLGEREETIPPDYRLEEAKDKDGKPLPPKEVKE) shows a compositional bias: basic and acidic residues. An Inhibitory domain 3 repeat occupies 449–502 (ADPEDGKPVEDKVKEKAKEEDREKLGEREETIPPDYRLEEAKDKDGKPLPPKEV). A phosphoserine mark is found at S519 and S530. The segment at 547-723 (SQTPAPTTQA…KPKADGKSTS (177 aa)) is disordered. Over residues 548-560 (QTPAPTTQAAGPP) the composition is skewed to low complexity. Residues 562-571 (DSARDNKELD) show a composition bias toward basic and acidic residues. S578 and S580 each carry phosphoserine. The stretch at 586–642 (PDPDEHKPVEDKVKEKAKAEHRDKLGERDDTIPPKYQHLLDDNKEGTPGKPKRSESP) is one Inhibitory domain 4 repeat. Residues 586-643 (PDPDEHKPVEDKVKEKAKAEHRDKLGERDDTIPPKYQHLLDDNKEGTPGKPKRSESPR) are compositionally biased toward basic and acidic residues. The span at 653–670 (NLQVPRTPLTPSQGTWTA) shows a compositional bias: polar residues. Residues 672 to 690 (PQLQKPQQTQQRTKTRSLL) are compositionally biased toward low complexity. Residues 701-723 (KAKDSTKAKEETSKPKADGKSTS) show a composition bias toward basic and acidic residues.

Belongs to the protease inhibitor I27 (calpastatin) family.

Specific inhibition of calpain (calcium-dependent cysteine protease). Plays a key role in postmortem tenderization of meat and have been proposed to be involved in muscle protein degradation in living tissue. In Ovis aries (Sheep), this protein is Calpastatin (CAST).